The primary structure comprises 473 residues: Glutamyl-tRNA reductase (473 aa).

Substrate is bound by residues 49 to 52 (TCNR), serine 109, 114 to 116 (EHQ), and glutamine 120. Cysteine 50 functions as the Nucleophile in the catalytic mechanism. Residue 189–194 (GAGAMA) participates in NADP(+) binding. The interval 422–473 (VAISAPQPSTDSPARAAYQPTDEAATDAEPRRDDAEPPSAAAAQDAGRESRP) is disordered.

Belongs to the glutamyl-tRNA reductase family. In terms of assembly, homodimer.

The enzyme catalyses (S)-4-amino-5-oxopentanoate + tRNA(Glu) + NADP(+) = L-glutamyl-tRNA(Glu) + NADPH + H(+). It functions in the pathway porphyrin-containing compound metabolism; protoporphyrin-IX biosynthesis; 5-aminolevulinate from L-glutamyl-tRNA(Glu): step 1/2. In terms of biological role, catalyzes the NADPH-dependent reduction of glutamyl-tRNA(Glu) to glutamate 1-semialdehyde (GSA). The polypeptide is Glutamyl-tRNA reductase (Acidothermus cellulolyticus (strain ATCC 43068 / DSM 8971 / 11B)).